A 339-amino-acid chain; its full sequence is tRNA methyltransferase 10 homolog A (339 aa).

2 disordered regions span residues 1–90 (MSSE…HDRK) and 282–339 (DKAC…SLPH). Residues 14-35 (NVDKKQGINEDQEESQKPRLGE) show a composition bias toward basic and acidic residues. Residues 52-81 (KQWEEQRELRKQKRKEKRKRKKLERQCQME) adopt a coiled-coil conformation. Positions 61 to 74 (RKQKRKEKRKRKKL) are enriched in basic residues. Residues 89 to 279 (RKRVRRDVVH…TILPQRKGAV (191 aa)) enclose the SAM-dependent MTase TRM10-type domain. Over residues 300–309 (GGSDSDSSEE) the composition is skewed to acidic residues. A compositionally biased stretch (basic and acidic residues) spans 310-330 (EYSRNELDSPHEEKQDKENHT). Position 336 is a phosphoserine (Ser336).

This sequence belongs to the class IV-like SAM-binding methyltransferase superfamily. TRM10 family. As to quaternary structure, interacts with tRNA. In terms of tissue distribution, expressed in embryonic and fetal brain. It is expressed throughout the dorsal telencephalon at 8 and 11 weeks of gestation, with highest expression in ventricular zone and marginal zone. Detected in cerebellar cortex and nuclei, but not in dorsal telencephalon, at later stages.

It localises to the nucleus. Its subcellular location is the nucleolus. It carries out the reaction guanosine(9) in tRNA + S-adenosyl-L-methionine = N(1)-methylguanosine(9) in tRNA + S-adenosyl-L-homocysteine + H(+). In terms of biological role, S-adenosyl-L-methionine-dependent guanine N(1)-methyltransferase that catalyzes the formation of N(1)-methylguanine at position 9 (m1G9) in tRNAs. Probably not able to catalyze formation of N(1)-methyladenine at position 9 (m1A9) in tRNAs. This is tRNA methyltransferase 10 homolog A (TRMT10A) from Homo sapiens (Human).